Here is a 392-residue protein sequence, read N- to C-terminus: tRNA-specific 2-thiouridylase MnmA (392 aa).

Residues 18 to 25 (GMSGGVDS) and methionine 44 each bind ATP. Positions 104–106 (NPD) are interaction with target base in tRNA. Cysteine 109 (nucleophile) is an active-site residue. A disulfide bridge connects residues cysteine 109 and cysteine 208. Glycine 133 contributes to the ATP binding site. The interaction with tRNA stretch occupies residues 158–160 (KDQ). The Cysteine persulfide intermediate role is filled by cysteine 208. The tract at residues 320–321 (RY) is interaction with tRNA.

This sequence belongs to the MnmA/TRMU family.

Its subcellular location is the cytoplasm. It carries out the reaction S-sulfanyl-L-cysteinyl-[protein] + uridine(34) in tRNA + AH2 + ATP = 2-thiouridine(34) in tRNA + L-cysteinyl-[protein] + A + AMP + diphosphate + H(+). In terms of biological role, catalyzes the 2-thiolation of uridine at the wobble position (U34) of tRNA, leading to the formation of s(2)U34. The chain is tRNA-specific 2-thiouridylase MnmA from Marinobacter nauticus (strain ATCC 700491 / DSM 11845 / VT8) (Marinobacter aquaeolei).